We begin with the raw amino-acid sequence, 1781 residues long: BCL-6 corepressor-like protein 1 (1781 aa).

Disordered regions lie at residues 64 to 136 and 337 to 362; these read AVGS…SHSR and ASTP…GPPS. 2 stretches are compositionally biased toward polar residues: residues 66 to 82 and 127 to 136; these read GSGS…NTTE and PDSTEASHSR. Serine 490 carries the phosphoserine modification. Residues 521-531 show a composition bias toward low complexity; that stretch reads SCTSPSSSTNS. Disordered stretches follow at residues 521–545, 561–616, 733–777, 869–895, and 933–960; these read SCTS…LADT, LLPA…EMPL, NRDP…STVK, PLGS…PEQD, and QPSS…TPKM. The segment covering 581 to 594 has biased composition (polar residues); the sequence is TDQQTEGTSVTFSP. 2 positions are modified to phosphoserine: serine 593 and serine 607. Lysine 741 participates in a covalent cross-link: Glycyl lysine isopeptide (Lys-Gly) (interchain with G-Cter in SUMO2). Serine 1024 carries the post-translational modification Phosphoserine. Lysine 1087 participates in a covalent cross-link: Glycyl lysine isopeptide (Lys-Gly) (interchain with G-Cter in SUMO2). A disordered region spans residues 1100-1484; sequence WQPDEETESL…PTARQIPPEA (385 aa). Positions 1116-1127 are enriched in basic and acidic residues; it reads CNKEKEIEEEPR. The residue at position 1162 (serine 1162) is a Phosphoserine. Over residues 1176-1185 the composition is skewed to basic residues; the sequence is VRGKHKHRKP. The span at 1195-1213 shows a compositional bias: basic and acidic residues; the sequence is KRTDGHEEGSLEKKAKNSF. Positions 1222 to 1234 are enriched in polar residues; the sequence is STRTRSQSGSICS. 2 stretches are compositionally biased toward basic and acidic residues: residues 1271 to 1284 and 1297 to 1307; these read TQRD…HAQD and RAREMPWRTEA. Residues 1314 to 1324 show a composition bias toward acidic residues; the sequence is TNEEEEDDEEE. Residues 1328–1339 show a composition bias toward basic residues; the sequence is KRKKRRRQKSRK. Basic and acidic residues predominate over residues 1350–1362; sequence EEQRRKGRADSKA. Composition is skewed to polar residues over residues 1381–1394 and 1437–1449; these read LLLS…SDSP and RWSQ…SKSP. ANK repeat units lie at residues 1493–1523, 1527–1556, and 1560–1589; these read AGET…DVNH, AGYT…NVNC, and DGTR…DPTL. Positions 1664–1781 are PCGF Ub-like fold domain (PUFD); required for the interaction with the KDM2B-SKP1 heterodimeric complex; that stretch reads DDFMFELSDK…SEVEYQSWSS (118 aa).

It belongs to the BCOR family. As to quaternary structure, interacts with PCGF1, forming heterodimers. The PCGF1-BCORL1 heterodimeric complex interacts with the KDM2B-SKP1 heterodimeric complex to form a homotetrameric polycomb repression complex 1 (PRC1.1). Interacts with SKP1. Interacts with CTBP1, HDAC4, HDAC5 and HDAC7. In terms of tissue distribution, highly expressed in lung and testis.

Its subcellular location is the nucleus. Transcriptional corepressor. May specifically inhibit gene expression when recruited to promoter regions by sequence specific DNA-binding proteins such as BCL6. This repression may be mediated at least in part by histone deacetylase activities which can associate with this corepressor. The protein is BCL-6 corepressor-like protein 1 (Bcorl1) of Mus musculus (Mouse).